The primary structure comprises 305 residues: MGLQKIVKKYNKKMKRKGLAGLDTAIILIAFIITASVLAYVAINMGLFVTQKAKSTINKGEETASTALTLSGSVLYAVNYPSNTRSYWIYFTVSPSSGVSSVELSPTTTAISFTASTEGVAYSNIYKYTLLTVDPSSLGHAVYANGQYLNLINQQTSAGQTYVYYPNPYYALLALNYTLYNYYLSTKTPSPIFINSSTLSSIPQWLKNDNSFTFTLNISGQLVTYDVFVNQTFAFTYPVAGDPLIGSAIAPAGSVIGVMILFGPDLGSHVFQYQTVTIQITPNVGSPLTISEYIYQPEGSVSVIG.

Residues M1–G18 constitute a propeptide, propeptide.

Belongs to the archaeal flagellin family. Glycosylated.

The protein localises to the archaeal flagellum. Its function is as follows. Flagellin is the subunit protein which polymerizes to form the filaments of archaeal flagella. This is Flagellin FlaB2 from Saccharolobus shibatae (strain ATCC 51178 / DSM 5389 / JCM 8931 / NBRC 15437 / B12) (Sulfolobus shibatae).